We begin with the raw amino-acid sequence, 175 residues long: CASP-like protein 2C1 (175 aa).

Residues 1 to 7 lie on the Cytoplasmic side of the membrane; that stretch reads MVKLRET. A helical membrane pass occupies residues 8–28; that stretch reads EVILRLCIVFFLLLTSCLIGL. The Extracellular portion of the chain corresponds to 29-45; it reads DSQTKEIAYIHKNVSFR. N-linked (GlcNAc...) asparagine glycosylation is present at Asn-41. A helical membrane pass occupies residues 46–66; that stretch reads YLLALEAELYIDVVVAAYNLV. Residues 67–91 lie on the Cytoplasmic side of the membrane; sequence QLGLGWYNVEQKTSNPKWFSYLLDQ. The helical transmembrane segment at 92-112 threads the bilayer; it reads TAAYVVFAGTSAAAQHSLLVV. The Extracellular segment spans residues 113–136; that stretch reads TGSRELQWMKWCYKFTRFCFQMGS. A helical transmembrane segment spans residues 137–157; sequence AIILNYIAAALMVLLSSISAF. The Cytoplasmic segment spans residues 158 to 175; that stretch reads NLFRLYSPKRFFRFKSSS.

The protein belongs to the Casparian strip membrane proteins (CASP) family. In terms of assembly, homodimer and heterodimers.

It is found in the cell membrane. The chain is CASP-like protein 2C1 from Arabidopsis thaliana (Mouse-ear cress).